We begin with the raw amino-acid sequence, 288 residues long: Syntaxin-1B (288 aa).

Positions 1–13 are enriched in basic and acidic residues; sequence MKDRTQELRSAKD. Residues 1 to 20 form a disordered region; it reads MKDRTQELRSAKDSDDEEEV. Over 1 to 264 the chain is Cytoplasmic; sequence MKDRTQELRS…KYQSKARRKK (264 aa). Phosphoserine is present on residues Ser-10 and Ser-14. Residues 29-104 adopt a coiled-coil conformation; the sequence is MDEFFEQVEE…IEQSIEQEEG (76 aa). A t-SNARE coiled-coil homology domain is found at 191–253; the sequence is LNEIETRHNE…ERAVSDTKKA (63 aa). A helical; Anchor for type IV membrane protein membrane pass occupies residues 265-288; that stretch reads IMIIICCVVLGVVLASSIGGTLGL.

Belongs to the syntaxin family. As to quaternary structure, interacts with OTOF. Interacts with SYT6 and SYT8; the interaction is Ca(2+)-dependent. In terms of processing, phosphorylated by CK2. Post-translationally, (Microbial infection) Targeted and hydrolyzed by C.botulinum neurotoxin type C (BoNT/C); cleavage by BoNT/C inhibits neurotransmitter release. Probably hydrolyzes the 252-Lys-|-Ala-253 bond.

Its subcellular location is the membrane. Potentially involved in docking of synaptic vesicles at presynaptic active zones. May mediate Ca(2+)-regulation of exocytosis acrosomal reaction in sperm. The protein is Syntaxin-1B (STX1B) of Bos taurus (Bovine).